A 1866-amino-acid polypeptide reads, in one-letter code: MDPVGLQLGNKNLWSCLVRLLTKDPEWLNAKMKFFLPNTDLDSRNETLDPEQRVILQLNKLHVQGSDTWQSFIHCVCMQLEVPLDLEVLLLSTFGYDDGFTSQLGAEGKSQPESQLHHGLKRPHQSCGSSPRRKQCKKQQLELAKKYLQLLRTSAQQRYRSQIPGSGQPHAFHQVYVPPILRRATASLDTPEGAIMGDVKVEDGADVSISDLFNTRVNKGPRVTVLLGKAGMGKTTLAHRLCQKWAEGHLNCFQALFLFEFRQLNLITRFLTPSELLFDLYLSPESDHDTVFQYLEKNADQVLLIFDGLDEALQPMGPDGPGPVLTLFSHLCNGTLLPGCRVMATSRPGKLPACLPAEAAMVHMLGFDGPRVEEYVNHFFSAQPSREGALVELQTNGRLRSLCAVPALCQVACLCLHHLLPDHAPGQSVALLPNMTQLYMQMVLALSPPGHLPTSSLLDLGEVALRGLETGKVIFYAKDIAPPLIAFGATHSLLTSFCVCTGPGHQQTGYAFTHLSLQEFLAALHLMASPKVNKDTLTQYVTLHSRWVQRTKARLGLSDHLPTFLAGLASCTCRPFLSHLAQGNEDCVGAKQAAVVQVLKKLATRKLTGPKVVELCHCVDETQEPELASLTAQSLPYQLPFHNFPLTCTDLATLTNILEHREAPIHLDFDGCPLEPHCPEALVGCGQIENLSFKSRKCGDAFAEALSRSLPTMGRLQMLGLAGSKITARGISHLVKALPLCPQLKEVSFRDNQLSDQVVLNIVEVLPHLPRLRKLDLSSNSICVSTLLCLARVAVTCPTVRMLQAREADLIFLLSPPTETTAELQRAPDLQESDGQRKGAQSRSLTLRLQKCQLQVHDAEALIALLQEGPHLEEVDLSGNQLEDEGCRLMAEAASQLHIARKLDLSNNGLSVAGVHCVLRAVSACWTLAELHISLQHKTVIFMFAQEPEEQKGPQERAAFLDSLMLQMPSELPLSSRRMRLTHCGLQEKHLEQLCKALGGSCHLGHLHLDFSGNALGDEGAARLAQLLPGLGALQSLNLSENGLSLDAVLGLVRCFSTLQWLFRLDISFESQHILLRGDKTSRDMWATGSLPDFPAAAKFLGFRQRCIPRSLCLSECPLEPPSLTRLCATLKDCPGPLELQLSCEFLSDQSLETLLDCLPQLPQLSLLQLSQTGLSPKSPFLLANTLSLCPRVKKVDLRSLHHATLHFRSNEEEEGVCCGRFTGCSLSQEHVESLCWLLSKCKDLSQVDLSANLLGDSGLRCLLECLPQVPISGLLDLSHNSISQESALYLLETLPSCPRVREASVNLGSEQSFRIHFSREDQAGKTLRLSECSFRPEHVSRLATGLSKSLQLTELTLTQCCLGQKQLAILLSLVGRPAGLFSLRVQEPWADRARVLSLLEVCAQASGSVTEISISETQQQLCVQLEFPRQEENPEAVALRLAHCDLGAHHSLLVGQLMETCARLQQLSLSQVNLCEDDDASSLLLQSLLLSLSELKTFRLTSSCVSTEGLAHLASGLGHCHHLEELDLSNNQFDEEGTKALMRALEGKWMLKRLDLSHLLLNSSTLALLTHRLSQMTCLQSLRLNRNSIGDVGCCHLSEALRAATSLEELDLSHNQIGDAGVQHLATILPGLPELRKIDLSGNSISSAGGVQLAESLVLCRRLEELMLGCNALGDPTALGLAQELPQHLRVLHLPFSHLGPGGALSLAQALDGSPHLEEISLAENNLAGGVLRFCMELPLLRQIDLVSCKIDNQTAKLLTSSFTSCPALEVILLSWNLLGDEAAAELAQVLPQMGRLKRVDLEKNQITALGAWLLAEGLAQGSSIQVIRLWNNPIPCDMAQHLKSQEPRLDFAFFDNQPQAPWGT.

The tract at residues 105–135 (GAEGKSQPESQLHHGLKRPHQSCGSSPRRKQ) is disordered. One can recognise an NACHT domain in the interval 222–539 (RVTVLLGKAG…PKVNKDTLTQ (318 aa)). 228 to 235 (GKAGMGKT) lines the ATP pocket. LRR repeat units follow at residues 599-622 (LKKL…VDET), 713-737 (MGRL…LVKA), 741-765 (CPQL…IVEV), 769-792 (LPRL…CLAR), 869-892 (GPHL…LMAE), 897-921 (LHIA…VLRA), 930-953 (ELHI…EQKG), 976-1000 (SRRM…ALGG), 1004-1026 (LGHL…RLAQ), 1031-1058 (LGAL…CFST), 1138-1161 (LELQ…CLPQ), 1162-1184 (LPQL…FLLA), 1242-1265 (CKDL…CLLE), 1272-1294 (ISGL…LLET), 1462-1488 (CARL…LLQS), 1493-1516 (LSEL…HLAS), 1521-1544 (CHHL…ALMR), 1554-1577 (RLDL…LSQM), 1578-1600 (TCLQ…HLSE), 1605-1628 (ATSL…HLAT), 1633-1656 (LPEL…QLAE), 1661-1684 (CRRL…GLAQ), 1687-1714 (PQHL…ALDG), 1715-1739 (SPHL…CMEL), 1741-1762 (LLRQ…LLTS), and 1795-1818 (MGRL…LLAE).

It belongs to the NLRP family. In terms of assembly, interacts with CHUK and IKBKB; prevents CHUK and IKBKB phosphorylation and inhibits their kinase activity. Interacts with RIGI and IFIH1; blocks the interaction of MAVS to RIGI. Expressed in spleen, thymus, lung, brain, tonsil, heart and prostate.

It is found in the cytoplasm. Functionally, probable regulator of the NF-kappa-B and type I interferon signaling pathways. May also regulate the type II interferon signaling pathway. Plays a role in homeostatic control of innate immunity and in antiviral defense mechanisms. The polypeptide is Protein NLRC5 (NLRC5) (Homo sapiens (Human)).